The sequence spans 606 residues: DNA mismatch repair protein MutL (606 aa).

A disordered region spans residues 340 to 366; it reads MNAFRPGYSPSGLRPSPSATWSAATSP. Residues 353–366 are compositionally biased toward low complexity; that stretch reads RPSPSATWSAATSP.

The protein belongs to the DNA mismatch repair MutL/HexB family.

Functionally, this protein is involved in the repair of mismatches in DNA. It is required for dam-dependent methyl-directed DNA mismatch repair. May act as a 'molecular matchmaker', a protein that promotes the formation of a stable complex between two or more DNA-binding proteins in an ATP-dependent manner without itself being part of a final effector complex. This chain is DNA mismatch repair protein MutL, found in Agrobacterium fabrum (strain C58 / ATCC 33970) (Agrobacterium tumefaciens (strain C58)).